The sequence spans 136 residues: Aspartate 1-decarboxylase (136 aa).

Residue Ser25 is the Schiff-base intermediate with substrate; via pyruvic acid of the active site. A Pyruvic acid (Ser) modification is found at Ser25. Thr57 serves as a coordination point for substrate. The Proton donor role is filled by Tyr58. A substrate-binding site is contributed by 73–75 (GAA).

It belongs to the PanD family. In terms of assembly, heterooctamer of four alpha and four beta subunits. Pyruvate is required as a cofactor. Post-translationally, is synthesized initially as an inactive proenzyme, which is activated by self-cleavage at a specific serine bond to produce a beta-subunit with a hydroxyl group at its C-terminus and an alpha-subunit with a pyruvoyl group at its N-terminus.

Its subcellular location is the cytoplasm. It catalyses the reaction L-aspartate + H(+) = beta-alanine + CO2. The protein operates within cofactor biosynthesis; (R)-pantothenate biosynthesis; beta-alanine from L-aspartate: step 1/1. In terms of biological role, catalyzes the pyruvoyl-dependent decarboxylation of aspartate to produce beta-alanine. In Corynebacterium glutamicum (strain R), this protein is Aspartate 1-decarboxylase.